The chain runs to 124 residues: UPF0102 protein TM1040_0449 (124 aa).

The protein belongs to the UPF0102 family.

The protein is UPF0102 protein TM1040_0449 of Ruegeria sp. (strain TM1040) (Silicibacter sp.).